The primary structure comprises 840 residues: Phosphatidylglycerol lysyltransferase (840 aa).

At 1 to 8 the chain is on the cytoplasmic side; that stretch reads MTQELKSK. A helical membrane pass occupies residues 9–29; sequence LLSFFKFIFATALFIFVIFTL. The Extracellular portion of the chain corresponds to 30-52; that stretch reads YRELSHINFKETFIQFGKINRLW. The chain crosses the membrane as a helical span at residues 53–73; sequence LVLLFAGGGLSLILLSLYDII. The Cytoplasmic portion of the chain corresponds to 74-89; it reads LVKALKLKMPLIRVFR. The chain crosses the membrane as a helical span at residues 90–110; that stretch reads VSYIINALNSIIGFGGFIGAG. Residues 111–129 are Extracellular-facing; sequence VRAFVYKNYTNDTKKLVQY. A helical membrane pass occupies residues 130–150; sequence ISIILVSMLTGLSLLSILVVL. Residues 151-161 lie on the Cytoplasmic side of the membrane; it reads RIFNASHMIDE. The chain crosses the membrane as a helical span at residues 162 to 182; sequence ISWVRWILYIVALFLPIFIFY. At 183 to 200 the chain is on the extracellular side; that stretch reads TVARPVDRNNRYMGVYCT. A helical transmembrane segment spans residues 201–221; that stretch reads VVSCVEWMAAATVLYFAALIV. Residues 222-229 are Cytoplasmic-facing; it reads DIHISFMT. Residues 230 to 250 traverse the membrane as a helical segment; that stretch reads FVGIFVIAALSGLVSFIPGGF. At 251–270 the chain is on the extracellular side; sequence GAFDLVVLLGLKSLGISEEK. A helical transmembrane segment spans residues 271–291; that stretch reads ILLALVLYRFAYYFVPVMIAL. Topologically, residues 292–337 are cytoplasmic; that stretch reads ILSSFEFGNTAKKYLDNSKYFIPVKDFTSFLRSYQKDILAKVPSFS. Residues 338–358 traverse the membrane as a helical segment; the sequence is LAILIFLTSIIFFINNLTIVY. Residues 359–366 are Extracellular-facing; sequence DGLYDGNH. A helical transmembrane segment spans residues 367 to 387; sequence FAYYIALAIQTSACLLLILNV. Residues 388–392 lie on the Cytoplasmic side of the membrane; sequence RGIYK. A helical transmembrane segment spans residues 393–413; it reads GSRRAIIYAFISIILIASATI. Residues 414-415 lie on the Extracellular side of the membrane; that stretch reads YT. The chain crosses the membrane as a helical span at residues 416–436; sequence YASFLLLSWLIIIFVLLILAY. The Cytoplasmic portion of the chain corresponds to 437 to 450; it reads QRAQVLKRPLRFKK. The helical transmembrane segment at 451–471 threads the bilayer; that stretch reads LAFMLLLSIFILYLNHILISG. Topologically, residues 472-489 are extracellular; sequence TLYALDVYHIEIDTSLLR. Residues 490–510 form a helical membrane-spanning segment; sequence YYFWMTIVIIMLLVGVIAWLF. Residues 511–840 are Cytoplasmic-facing; that stretch reads DYKYKRPHHS…LKVMRVIRHK (330 aa).

The protein belongs to the LPG synthase family.

The protein localises to the cell membrane. It carries out the reaction L-lysyl-tRNA(Lys) + a 1,2-diacyl-sn-glycero-3-phospho-(1'-sn-glycerol) = a 1,2-diacyl-sn-glycero-3-phospho-1'-(3'-O-L-lysyl)-sn-glycerol + tRNA(Lys). In terms of biological role, catalyzes the transfer of a lysyl group from L-lysyl-tRNA(Lys) to membrane-bound phosphatidylglycerol (PG), which produces lysylphosphatidylglycerol (LPG), a major component of the bacterial membrane with a positive net charge. LPG synthesis contributes to bacterial virulence as it is involved in the resistance mechanism against cationic antimicrobial peptides (CAMP) produces by the host's immune system (defensins, cathelicidins) and by the competing microorganisms (bacteriocins). In fact, the modification of anionic phosphatidylglycerol with positively charged L-lysine results in repulsion of the peptides. The sequence is that of Phosphatidylglycerol lysyltransferase (mprF) from Staphylococcus epidermidis (strain ATCC 35984 / DSM 28319 / BCRC 17069 / CCUG 31568 / BM 3577 / RP62A).